Reading from the N-terminus, the 339-residue chain is Ketol-acid reductoisomerase (NADP(+)) (339 aa).

A KARI N-terminal Rossmann domain is found at 1 to 182; the sequence is MRVYYDRDAD…GGGRAGIIET (182 aa). Residues 24-27, Arg-48, Ser-51, Thr-53, and 83-86 contribute to the NADP(+) site; these read YGSQ and DELQ. Residue His-108 is part of the active site. Gly-134 is an NADP(+) binding site. A KARI C-terminal knotted domain is found at 183–328; it reads TFKEECETDL…AKLRGMMPWI (146 aa). Mg(2+) contacts are provided by Asp-191, Glu-195, Glu-227, and Glu-231. Position 252 (Ser-252) interacts with substrate.

Belongs to the ketol-acid reductoisomerase family. It depends on Mg(2+) as a cofactor.

It catalyses the reaction (2R)-2,3-dihydroxy-3-methylbutanoate + NADP(+) = (2S)-2-acetolactate + NADPH + H(+). It carries out the reaction (2R,3R)-2,3-dihydroxy-3-methylpentanoate + NADP(+) = (S)-2-ethyl-2-hydroxy-3-oxobutanoate + NADPH + H(+). It participates in amino-acid biosynthesis; L-isoleucine biosynthesis; L-isoleucine from 2-oxobutanoate: step 2/4. Its pathway is amino-acid biosynthesis; L-valine biosynthesis; L-valine from pyruvate: step 2/4. Functionally, involved in the biosynthesis of branched-chain amino acids (BCAA). Catalyzes an alkyl-migration followed by a ketol-acid reduction of (S)-2-acetolactate (S2AL) to yield (R)-2,3-dihydroxy-isovalerate. In the isomerase reaction, S2AL is rearranged via a Mg-dependent methyl migration to produce 3-hydroxy-3-methyl-2-ketobutyrate (HMKB). In the reductase reaction, this 2-ketoacid undergoes a metal-dependent reduction by NADPH to yield (R)-2,3-dihydroxy-isovalerate. This Methylorubrum populi (strain ATCC BAA-705 / NCIMB 13946 / BJ001) (Methylobacterium populi) protein is Ketol-acid reductoisomerase (NADP(+)).